Reading from the N-terminus, the 141-residue chain is Protein C19orf12 homolog (141 aa).

Residues 37-57 form a helical membrane-spanning segment; it reads AVAFVGGLVGGPPGLAVGGAV.

It belongs to the C19orf12 family.

Its subcellular location is the mitochondrion. The protein resides in the mitochondrion membrane. It localises to the endoplasmic reticulum. It is found in the cytoplasm. The protein localises to the cytosol. This Bos taurus (Bovine) protein is Protein C19orf12 homolog.